The chain runs to 51 residues: Ovomucoid (51 aa).

The 49-residue stretch at 1–49 folds into the Kazal-like domain; that stretch reads VDCSEYPQPACTTERRPVCGSNNKTYSNKCNFCNAVVKSNGTLTVSHFG. Intrachain disulfides connect Cys3-Cys33, Cys11-Cys30, and Cys19-Cys51. Residue Asn40 is glycosylated (N-linked (GlcNAc...) asparagine).

The protein localises to the secreted. The polypeptide is Ovomucoid (Polyplectron napoleonis (Palawan peacock-pheasant)).